Reading from the N-terminus, the 208-residue chain is Outer-membrane lipoprotein carrier protein (208 aa).

The signal sequence occupies residues 1 to 21 (MRLIRTLFVAALAMGTSLAHA).

Belongs to the LolA family. As to quaternary structure, monomer.

The protein localises to the periplasm. In terms of biological role, participates in the translocation of lipoproteins from the inner membrane to the outer membrane. Only forms a complex with a lipoprotein if the residue after the N-terminal Cys is not an aspartate (The Asp acts as a targeting signal to indicate that the lipoprotein should stay in the inner membrane). This chain is Outer-membrane lipoprotein carrier protein, found in Pseudomonas paraeruginosa (strain DSM 24068 / PA7) (Pseudomonas aeruginosa (strain PA7)).